The sequence spans 505 residues: Trans-cinnamate 4-monooxygenase (505 aa).

Residues 3–23 (LLLLEKTLLGSFVAVLVAILV) form a helical membrane-spanning segment. (E)-cinnamate contacts are provided by residues 213 to 218 (RSRLAQ) and alanine 306. Cysteine 447 contributes to the heme binding site.

It belongs to the cytochrome P450 family. Requires heme as cofactor.

It localises to the membrane. The enzyme catalyses (E)-cinnamate + reduced [NADPH--hemoprotein reductase] + O2 = (E)-4-coumarate + oxidized [NADPH--hemoprotein reductase] + H2O + H(+). It functions in the pathway phenylpropanoid metabolism; trans-4-coumarate biosynthesis; trans-4-coumarate from trans-cinnamate: step 1/1. Functionally, catalyzes the first oxidative step of the phenylpropanoid pathway in higher plants by transforming trans-cinnamate into p-coumarate. The compounds formed by this pathway are essential components for lignification, pollination, and defense against ultraviolet light, predators and pathogens. This Populus kitakamiensis (Aspen) protein is Trans-cinnamate 4-monooxygenase (CYP73A16).